Consider the following 451-residue polypeptide: Hexokinase (451 aa).

The 440-residue stretch at 6–445 (QQLFEKVVEI…SGKGAAAIAA (440 aa)) folds into the Hexokinase domain. Residues 63–195 (NGTETGNFLA…ELNVKCVAVV (133 aa)) form a hexokinase small subdomain region. Residue 74-79 (DLGGTN) coordinates ATP. Residues S144, 161 to 162 (TK), 196 to 197 (ND), 222 to 223 (TN), E249, and E283 each bind substrate. Positions 196–434 (NDTVGTLASC…TRFCLRLSED (239 aa)) are hexokinase large subdomain. ATP contacts are provided by residues 288-289 (GM), 325-329 (TRYLT), and 401-405 (SLYKF).

The protein belongs to the hexokinase family. Monomer.

The catalysed reaction is a D-hexose + ATP = a D-hexose 6-phosphate + ADP + H(+). It carries out the reaction D-mannose + ATP = D-mannose 6-phosphate + ADP + H(+). It catalyses the reaction D-fructose + ATP = D-fructose 6-phosphate + ADP + H(+). The enzyme catalyses D-glucose + ATP = D-glucose 6-phosphate + ADP + H(+). It functions in the pathway carbohydrate metabolism; hexose metabolism. The protein operates within carbohydrate degradation; glycolysis; D-glyceraldehyde 3-phosphate and glycerone phosphate from D-glucose: step 1/4. Functionally, catalyzes the phosphorylation of various hexoses to hexose 6-phosphate. This is Hexokinase from Schistosoma mansoni (Blood fluke).